The primary structure comprises 534 residues: Alkaline serine exoprotease A (534 aa).

The signal sequence occupies residues 1-21; sequence MLKKLLSCCITSALCFHSSLA. A propeptide spanning residues 22 to 141 is cleaved from the precursor; sequence FSQPNEIADS…LSLDPIVSAD (120 aa). The Inhibitor I9 domain occupies 57 to 134; that stretch reads RYIVVFQQPQ…YIEQDRILSL (78 aa). Positions 148-419 constitute a Peptidase S8 domain; that stretch reads IWGLDRIDQR…KLLYSLTDAD (272 aa). Active-site charge relay system residues include aspartate 180, histidine 213, and serine 363. A disordered region spans residues 423–442; that stretch reads DCGGPDPTPDPEGKLTSGVP.

This sequence belongs to the peptidase S8 family.

This Vibrio alginolyticus protein is Alkaline serine exoprotease A (proA).